Consider the following 198-residue polypeptide: Probable chemoreceptor glutamine deamidase CheD (198 aa).

This sequence belongs to the CheD family.

It catalyses the reaction L-glutaminyl-[protein] + H2O = L-glutamyl-[protein] + NH4(+). Functionally, probably deamidates glutamine residues to glutamate on methyl-accepting chemotaxis receptors (MCPs), playing an important role in chemotaxis. The protein is Probable chemoreceptor glutamine deamidase CheD of Stenotrophomonas maltophilia (strain K279a).